Here is a 709-residue protein sequence, read N- to C-terminus: Catalase HPII (709 aa).

The span at 1-26 shows a compositional bias: polar residues; that stretch reads MSEQNNEQRSQAAGTDTVDRGNSNAK. A disordered region spans residues 1–32; sequence MSEQNNEQRSQAAGTDTVDRGNSNAKLEQLEA. Active-site residues include H90 and N163. Y377 contacts heme. Positions 419–443 are disordered; it reads RASYEPNSIDGGWPKETPPAARNGG.

The protein belongs to the catalase family. HPII subfamily. Heme serves as cofactor.

The protein localises to the cytoplasm. The enzyme catalyses 2 H2O2 = O2 + 2 H2O. In terms of biological role, decomposes hydrogen peroxide into water and oxygen; serves to protect cells from the toxic effects of hydrogen peroxide. This Pseudomonas aeruginosa (strain ATCC 15692 / DSM 22644 / CIP 104116 / JCM 14847 / LMG 12228 / 1C / PRS 101 / PAO1) protein is Catalase HPII (katE).